A 67-amino-acid chain; its full sequence is MAKIADLTAKTDDQLAQDLGELKREQFNLRFQAATSQLEKPSRVKEVRRTIAQIKTLQTQRAAAAAK.

It belongs to the universal ribosomal protein uL29 family.

The polypeptide is Large ribosomal subunit protein uL29 (Rhizorhabdus wittichii (strain DSM 6014 / CCUG 31198 / JCM 15750 / NBRC 105917 / EY 4224 / RW1) (Sphingomonas wittichii)).